Reading from the N-terminus, the 185-residue chain is Elongation factor P (185 aa).

It belongs to the elongation factor P family.

The protein resides in the cytoplasm. It functions in the pathway protein biosynthesis; polypeptide chain elongation. Its function is as follows. Involved in peptide bond synthesis. Stimulates efficient translation and peptide-bond synthesis on native or reconstituted 70S ribosomes in vitro. Probably functions indirectly by altering the affinity of the ribosome for aminoacyl-tRNA, thus increasing their reactivity as acceptors for peptidyl transferase. The chain is Elongation factor P from Thermosipho africanus (strain TCF52B).